The following is a 380-amino-acid chain: Probable G-protein coupled receptor 132 (380 aa).

Topologically, residues Met1–Leu45 are extracellular. Asn35 carries an N-linked (GlcNAc...) asparagine glycan. Residues Val46–Leu68 form a helical membrane-spanning segment. Topologically, residues Leu69–Val79 are cytoplasmic. A helical membrane pass occupies residues Tyr80–Ile102. Topologically, residues Arg103–Lys116 are extracellular. A disulfide bond links Cys115 and Cys186. Residues Val117 to Cys138 form a helical membrane-spanning segment. At Asp139 to Thr158 the chain is on the cytoplasmic side. The helical transmembrane segment at Ala159 to Phe178 threads the bilayer. Residues Gln179–Ala197 lie on the Extracellular side of the membrane. Residues Gly198–His220 form a helical membrane-spanning segment. Over Arg221–Ala246 the chain is Cytoplasmic. A helical membrane pass occupies residues Val247–Phe269. At Ser270–Thr288 the chain is on the extracellular side. Residues Ala289–Ala311 traverse the membrane as a helical segment. The Cytoplasmic portion of the chain corresponds to Thr312–Cys380.

The protein belongs to the G-protein coupled receptor 1 family. In terms of tissue distribution, highly expressed in macrophages and hematopoietic tissues rich in lymphocytes, like spleen and thymus. Weakly expressed in heart and lung. In atherosclerotic plaques, expression is observed around the lipid core and at the shoulder region.

It is found in the cell membrane. Its function is as follows. May be a receptor for oxidized free fatty acids derived from linoleic and arachidonic acids such as 9-hydroxyoctadecadienoic acid (9-HODE). Activates a G alpha protein, most likely G alpha(q). May be involved in apoptosis. Functions at the G2/M checkpoint to delay mitosis. May function as a sensor that monitors the oxidative states and mediates appropriate cellular responses such as secretion of paracrine signals and attenuation of proliferation. May mediate ths accumulation of intracellular inositol phosphates at acidic pH through proton-sensing activity. The protein is Probable G-protein coupled receptor 132 (GPR132) of Homo sapiens (Human).